Consider the following 808-residue polypeptide: Phenylalanine--tRNA ligase beta subunit (808 aa).

Positions 40–149 (RPELDFVKIV…DQAEVGKTIR (110 aa)) constitute a tRNA-binding domain. The B5 domain occupies 407 to 484 (HKEVRIHTDI…RTKGYDTIQV (78 aa)). Residues Asp462, Asp468, Glu471, and Glu472 each contribute to the Mg(2+) site. One can recognise an FDX-ACB domain in the interval 716-808 (SQFPEAEIDL…LAGKNGFVLR (93 aa)).

This sequence belongs to the phenylalanyl-tRNA synthetase beta subunit family. Type 1 subfamily. In terms of assembly, tetramer of two alpha and two beta subunits. Mg(2+) is required as a cofactor.

It is found in the cytoplasm. It catalyses the reaction tRNA(Phe) + L-phenylalanine + ATP = L-phenylalanyl-tRNA(Phe) + AMP + diphosphate + H(+). In Leptospira interrogans serogroup Icterohaemorrhagiae serovar copenhageni (strain Fiocruz L1-130), this protein is Phenylalanine--tRNA ligase beta subunit.